A 589-amino-acid chain; its full sequence is Probable translation initiation factor IF-2 (589 aa).

The tr-type G domain occupies Leu-14 to Glu-231. The segment at Gly-23 to Thr-30 is G1. GTP is bound at residue Gly-23–Thr-30. Residues Gly-48–Arg-52 are G2. The segment at Asp-84 to Gly-87 is G3. Residues Asp-84–His-88 and Asn-138–Asp-141 contribute to the GTP site. The interval Asn-138–Asp-141 is G4. The tract at residues Ser-206–Lys-208 is G5.

This sequence belongs to the TRAFAC class translation factor GTPase superfamily. Classic translation factor GTPase family. IF-2 subfamily.

Functionally, function in general translation initiation by promoting the binding of the formylmethionine-tRNA to ribosomes. Seems to function along with eIF-2. The polypeptide is Probable translation initiation factor IF-2 (Thermoplasma volcanium (strain ATCC 51530 / DSM 4299 / JCM 9571 / NBRC 15438 / GSS1)).